Reading from the N-terminus, the 657-residue chain is WD repeat-containing protein 70 (657 aa).

2 disordered regions span residues 1-21 (MEHS…DPQL) and 43-172 (FEQT…PVQR). The segment covering 45–78 (QTRRTAVERSRKTLEAREKEEEMNREKELRKQIE) has biased composition (basic and acidic residues). Positions 82–105 (PAPSSSSAARERSQSSCRDTSSSD) are enriched in low complexity. Acidic residues-rich tracts occupy residues 106-119 (SESD…DDEL) and 150-168 (EEGE…EEDN). 7 WD repeats span residues 183–222 (HGTK…ASFK), 230–271 (CECH…ECIK), 284–324 (GHTA…KQKS), 333–372 (GKKV…HPKF), 379–418 (DPGT…KPLF), 424–469 (PTLF…RVYE), and 472–511 (ITDA…QRGA). A Glycyl lysine isopeptide (Lys-Gly) (interchain with G-Cter in SUMO2) cross-link involves residue Lys299. Lys455 carries the post-translational modification N6-acetyllysine. The segment covering 543-568 (REPRQRSTRKQLEKDRLDPLKSHKPE) has biased composition (basic and acidic residues). The tract at residues 543–584 (REPRQRSTRKQLEKDRLDPLKSHKPEPPVAGPGRGGRVGTHG) is disordered. The span at 574-584 (PGRGGRVGTHG) shows a compositional bias: gly residues. Thr582 is modified (phosphothreonine). Residues Lys593 and Lys599 each participate in a glycyl lysine isopeptide (Lys-Gly) (interchain with G-Cter in SUMO2) cross-link. A phosphoserine mark is found at Ser624 and Ser641. The segment at 634–657 (TMFAQVESDDEESKNEPEWKKRKI) is disordered. Basic and acidic residues predominate over residues 647–657 (KNEPEWKKRKI).

It belongs to the WD repeat GAD-1 family.

The polypeptide is WD repeat-containing protein 70 (Wdr70) (Mus musculus (Mouse)).